A 454-amino-acid polypeptide reads, in one-letter code: UPF0210 protein BLA_0552 (454 aa).

Belongs to the UPF0210 family. Homodimer.

The chain is UPF0210 protein BLA_0552 from Bifidobacterium animalis subsp. lactis (strain AD011).